A 194-amino-acid polypeptide reads, in one-letter code: Large ribosomal subunit protein uL18 (194 aa).

Belongs to the universal ribosomal protein uL18 family. Part of the 50S ribosomal subunit. Contacts the 5S and 23S rRNAs.

In terms of biological role, this is one of the proteins that bind and probably mediate the attachment of the 5S RNA into the large ribosomal subunit, where it forms part of the central protuberance. The polypeptide is Large ribosomal subunit protein uL18 (Methanococcus aeolicus (strain ATCC BAA-1280 / DSM 17508 / OCM 812 / Nankai-3)).